Reading from the N-terminus, the 312-residue chain is Malate dehydrogenase (312 aa).

Residues 7–13 (GAAGGIG) and D34 contribute to the NAD(+) site. Residues R81 and R87 each contribute to the substrate site. Residues N94 and 117 to 119 (ITN) each bind NAD(+). Substrate-binding residues include N119 and R153. The active-site Proton acceptor is H177. M227 is an NAD(+) binding site.

Belongs to the LDH/MDH superfamily. MDH type 1 family. Homodimer.

The enzyme catalyses (S)-malate + NAD(+) = oxaloacetate + NADH + H(+). Functionally, catalyzes the reversible oxidation of malate to oxaloacetate. In Yersinia pseudotuberculosis serotype O:1b (strain IP 31758), this protein is Malate dehydrogenase.